A 79-amino-acid polypeptide reads, in one-letter code: Large ribosomal subunit protein bL28 (79 aa).

Belongs to the bacterial ribosomal protein bL28 family.

The chain is Large ribosomal subunit protein bL28 from Christiangramia forsetii (strain DSM 17595 / CGMCC 1.15422 / KT0803) (Gramella forsetii).